Reading from the N-terminus, the 682-residue chain is Methionine--tRNA ligase (682 aa).

The 'HIGH' region signature appears at 15–25 (PYANGAIHLGH). Zn(2+) contacts are provided by Cys146, Cys149, Cys159, and Cys162. The short motif at 331–335 (KMSKS) is the 'KMSKS' region element. An ATP-binding site is contributed by Lys334. The tRNA-binding domain maps to 580 to 682 (DLAKLDMRVA…NGVTAGMQVK (103 aa)).

This sequence belongs to the class-I aminoacyl-tRNA synthetase family. MetG type 1 subfamily. As to quaternary structure, homodimer. Requires Zn(2+) as cofactor.

The protein localises to the cytoplasm. The enzyme catalyses tRNA(Met) + L-methionine + ATP = L-methionyl-tRNA(Met) + AMP + diphosphate. Is required not only for elongation of protein synthesis but also for the initiation of all mRNA translation through initiator tRNA(fMet) aminoacylation. This Haemophilus influenzae (strain 86-028NP) protein is Methionine--tRNA ligase.